The chain runs to 355 residues: Double-stranded RNA-binding protein 4 (355 aa).

2 consecutive DRBM domains span residues 4 to 73 (VYKG…SLTP) and 82 to 150 (AYKN…SIKN). Polar residues predominate over residues 149 to 188 (KNGNSNQTGSPTLPSERQEDVNSNVKSSPQEIHSQPSSKV). Residues 149–193 (KNGNSNQTGSPTLPSERQEDVNSNVKSSPQEIHSQPSSKVVMTPD) form a disordered region.

As to quaternary structure, heterodimer with DRB1 or DRB5. Interacts with DCL4 and cauliflower mosaic virus (CaMV) transactivator/viroplasmin protein. Interaction with CaMV transactivator/viroplasmin protein inhibits RNA silencing ability of DRB4. As to expression, expressed in roots, leaf vasculature, shoot apical meristem (SAM) and developing anthers.

The protein resides in the nucleus. Double-stranded RNA-binding protein involved in RNA-mediated post-transcriptional gene silencing (PTGS). Functions in the trans-acting small interfering RNAs (ta-siRNAs) biogenesis by binding and assisting DICER-LIKE 4 (DCL4). Required for DCL4 activity. Required for the 21 nucleotide ta-siRNAs production of the TAS3 transcript in leaves but not in flowers. Plays an important role in silencing RNA of both DNA and RNA viruses. Involved with argonaute 7 (AGO7) and RDR6 in turnip crinkle virus (TCV) silencing. May not be directly involved in viral siRNA production. May stabilize the 21 nucleotide viral siRNAs and deliver them to the RISC complex. Targeted by the viral silencing suppressor (VSR) transactivator/viroplasmin (TAV) protein of the cauliflower mosaic virus (CaMV) that inactivates DRB4 function in RNA silencing. Probably not involved in the guide strand selection from RNA duplexes. Involved in leaf morphology through its function in ta-siRNA-mediated silencing. In Arabidopsis thaliana (Mouse-ear cress), this protein is Double-stranded RNA-binding protein 4 (DBR4).